Consider the following 702-residue polypeptide: Lipase maturation factor 2 (702 aa).

The next 10 helical transmembrane spans lie at leucine 10–isoleucine 30, alanine 75–leucine 95, phenylalanine 102–leucine 122, tyrosine 123–leucine 143, aspartate 164–valine 184, leucine 226–isoleucine 246, leucine 259–valine 279, leucine 316–leucine 336, valine 363–leucine 383, and phenylalanine 396–serine 416. The N-linked (GlcNAc...) asparagine glycan is linked to asparagine 488. The chain crosses the membrane as a helical span at residues glutamine 628 to isoleucine 648. The interval leucine 660 to lysine 702 is disordered. Basic and acidic residues predominate over residues glutamine 665 to alanine 681. Residues valine 682 to serine 695 are compositionally biased toward polar residues.

It belongs to the lipase maturation factor family.

It is found in the endoplasmic reticulum membrane. In terms of biological role, involved in the maturation of specific proteins in the endoplasmic reticulum. May be required for maturation and transport of active lipoprotein lipase (LPL) through the secretory pathway. This is Lipase maturation factor 2 (Lmf2) from Rattus norvegicus (Rat).